The sequence spans 85 residues: Putative transmembrane protein ORF28 (85 aa).

2 helical membrane-spanning segments follow: residues Ile-32 to Val-52 and Leu-59 to Ile-79.

The protein resides in the host membrane. This chain is Putative transmembrane protein ORF28, found in Haloarcula hispanica (His1V).